We begin with the raw amino-acid sequence, 260 residues long: Thiazole synthase (260 aa).

The active-site Schiff-base intermediate with DXP is lysine 96. 1-deoxy-D-xylulose 5-phosphate is bound by residues glycine 157, 183–184, and 205–206; these read AG and AS.

It belongs to the ThiG family. In terms of assembly, homotetramer. Forms heterodimers with either ThiH or ThiS.

It localises to the cytoplasm. The enzyme catalyses [ThiS sulfur-carrier protein]-C-terminal-Gly-aminoethanethioate + 2-iminoacetate + 1-deoxy-D-xylulose 5-phosphate = [ThiS sulfur-carrier protein]-C-terminal Gly-Gly + 2-[(2R,5Z)-2-carboxy-4-methylthiazol-5(2H)-ylidene]ethyl phosphate + 2 H2O + H(+). It participates in cofactor biosynthesis; thiamine diphosphate biosynthesis. Catalyzes the rearrangement of 1-deoxy-D-xylulose 5-phosphate (DXP) to produce the thiazole phosphate moiety of thiamine. Sulfur is provided by the thiocarboxylate moiety of the carrier protein ThiS. In vitro, sulfur can be provided by H(2)S. In Corynebacterium glutamicum (strain R), this protein is Thiazole synthase.